A 109-amino-acid polypeptide reads, in one-letter code: Small ribosomal subunit protein uS10 (109 aa).

The protein belongs to the universal ribosomal protein uS10 family. In terms of assembly, part of the 30S ribosomal subunit.

Involved in the binding of tRNA to the ribosomes. The polypeptide is Small ribosomal subunit protein uS10 (Koribacter versatilis (strain Ellin345)).